We begin with the raw amino-acid sequence, 534 residues long: Probable DNA ligase (534 aa).

Glutamate 213 is an ATP binding site. Lysine 215 (N6-AMP-lysine intermediate) is an active-site residue. ATP contacts are provided by arginine 220, arginine 235, glutamate 264, phenylalanine 303, arginine 375, and lysine 381.

It belongs to the ATP-dependent DNA ligase family. Mg(2+) is required as a cofactor.

It catalyses the reaction ATP + (deoxyribonucleotide)n-3'-hydroxyl + 5'-phospho-(deoxyribonucleotide)m = (deoxyribonucleotide)n+m + AMP + diphosphate.. Functionally, DNA ligase that seals nicks in double-stranded DNA during DNA replication, DNA recombination and DNA repair. This Mycolicibacterium vanbaalenii (strain DSM 7251 / JCM 13017 / BCRC 16820 / KCTC 9966 / NRRL B-24157 / PYR-1) (Mycobacterium vanbaalenii) protein is Probable DNA ligase.